The sequence spans 491 residues: NADH-quinone oxidoreductase subunit N (491 aa).

The next 14 membrane-spanning stretches (helical) occupy residues 6–26 (TLAPVAPIIFLAIAIAAINWI), 37–57 (VAYPLSLLTTLVLTAWFGMNA), 69–89 (LVVIDPMANVLSAFCAAGLFV), 103–123 (MFAGEFYMLALFTLGGQIVMI), 128–148 (FLTLYLGLELLSLSSYALVAL), 163–183 (FVLGALASGFLLYGISMMYGA), 206–226 (LAFGVVFIVAGLSFKLGAAPF), 238–258 (PTAVTLLIAGGPKVAAFALFI), 273–293 (QMMLVVLSIISLAIGNLTAIV), 301–321 (LAYSTISHMGFVLLGLLSGVV), 335–355 (AMFYSVTYLLTTLGTFGIILL), 379–399 (FAFLMLVMMFSLAGIPPTVGF), 413–433 (GMTWLAVVAVLFSLIGAFYYL), and 458–478 (SMLSVNGAAVILLGLFPAALM).

The protein belongs to the complex I subunit 2 family. In terms of assembly, NDH-1 is composed of 14 different subunits. Subunits NuoA, H, J, K, L, M, N constitute the membrane sector of the complex.

It localises to the cell inner membrane. The enzyme catalyses a quinone + NADH + 5 H(+)(in) = a quinol + NAD(+) + 4 H(+)(out). NDH-1 shuttles electrons from NADH, via FMN and iron-sulfur (Fe-S) centers, to quinones in the respiratory chain. The immediate electron acceptor for the enzyme in this species is believed to be ubiquinone. Couples the redox reaction to proton translocation (for every two electrons transferred, four hydrogen ions are translocated across the cytoplasmic membrane), and thus conserves the redox energy in a proton gradient. The chain is NADH-quinone oxidoreductase subunit N from Cupriavidus taiwanensis (strain DSM 17343 / BCRC 17206 / CCUG 44338 / CIP 107171 / LMG 19424 / R1) (Ralstonia taiwanensis (strain LMG 19424)).